A 177-amino-acid polypeptide reads, in one-letter code: Negative modulator of initiation of replication (177 aa).

Belongs to the SeqA family. As to quaternary structure, homodimer. Polymerizes to form helical filaments.

Its subcellular location is the cytoplasm. Negative regulator of replication initiation, which contributes to regulation of DNA replication and ensures that replication initiation occurs exactly once per chromosome per cell cycle. Binds to pairs of hemimethylated GATC sequences in the oriC region, thus preventing assembly of replication proteins and re-initiation at newly replicated origins. Repression is relieved when the region becomes fully methylated. The chain is Negative modulator of initiation of replication from Vibrio cholerae serotype O1 (strain ATCC 39315 / El Tor Inaba N16961).